Consider the following 354-residue polypeptide: Carbonic anhydrase 12 (354 aa).

The first 24 residues, M1–S24, serve as a signal peptide directing secretion. The Extracellular portion of the chain corresponds to A25–S301. N28, N42, N80, and N88 each carry an N-linked (GlcNAc...) asparagine glycan. The Alpha-carbonic anhydrase domain maps to S30–F290. Cysteines 50 and 231 form a disulfide. The Proton donor/acceptor role is filled by H94. Zn(2+) contacts are provided by H120, H122, and H146. Residue T227–T228 participates in substrate binding. The helical transmembrane segment at L302–V322 threads the bilayer. Residues S323–A354 are Cytoplasmic-facing.

This sequence belongs to the alpha-carbonic anhydrase family. In terms of assembly, homodimer. Zn(2+) is required as a cofactor.

It localises to the membrane. It is found in the cell membrane. The enzyme catalyses hydrogencarbonate + H(+) = CO2 + H2O. With respect to regulation, inhibited by acetazolamide. Functionally, reversible hydration of carbon dioxide. The chain is Carbonic anhydrase 12 from Mus musculus (Mouse).